Consider the following 533-residue polypeptide: Heterogeneous nuclear ribonucleoprotein Q (533 aa).

Alanine 2 is subject to N-acetylalanine. Serine 69 carries the post-translational modification Phosphoserine. 3 RRM domains span residues 72-151, 153-235, and 248-318; these read TEIF…ISVA, NRLF…WADP, and KVLF…FAKP. Residue lysine 78 forms a Glycyl lysine isopeptide (Lys-Gly) (interchain with G-Cter in SUMO2) linkage. Lysine 131 is subject to N6-acetyllysine. Residue lysine 273 is modified to N6-acetyllysine. The residue at position 283 (tyrosine 283) is a Phosphotyrosine. An interaction with APOBEC1 region spans residues 310–471; the sequence is NIEIVFAKPP…GARGGRGGNV (162 aa). Arginine 354 carries the asymmetric dimethylarginine; by PRMT1; alternate modification. Arginine 354 is subject to Omega-N-methylarginine; by PRMT1; alternate. A run of 6 repeats spans residues 358–360, 361–363, 370–374, 379–382, 388–390, and 395–398. Residues 358-469 are 8 X 3 AA repeats of R-G-G; that stretch reads RGGRGGYGYP…VRGARGGRGG (112 aa). The 3 X 4 AA repeats of Y-Y-G-Y stretch occupies residues 370–398; sequence YYGYEDYYDYYGYDYHNYRGGYEDPYYGY. The residue at position 406 (arginine 406) is an Omega-N-methylarginine; by PRMT1. The tract at residues 407–533 is disordered; it reads GRGGRGARGA…YQDTFGQQWK (127 aa). One copy of the 1-4 repeat lies at 408-410; it reads RGG. Low complexity predominate over residues 414–432; it reads RGAAPSRGRGAAPPRGRAG. The residue at position 420 (arginine 420) is an Asymmetric dimethylarginine; by PRMT1. Arginine 428 is subject to Asymmetric dimethylarginine; by PRMT1; alternate. Position 428 is an omega-N-methylarginine; by PRMT1; alternate (arginine 428). Positions 428 to 459 are interaction with SMN; sequence RGRAGYSQRGGPGSARGVRGARGGAQQQRGRG. Arginine 436 carries the asymmetric dimethylarginine; alternate modification. Arginine 436 bears the Omega-N-methylarginine; alternate mark. The stretch at 436 to 438 is one 1-5 repeat; the sequence is RGG. Residues arginine 446 and arginine 449 each carry the asymmetric dimethylarginine; by PRMT1; alternate modification. 2 positions are modified to omega-N-methylarginine; by PRMT1; alternate: arginine 446 and arginine 449. 3 repeat units span residues 449–451, 464–466, and 467–469. The span at 460-472 shows a compositional bias: gly residues; sequence VRGARGGRGGNVG. A Bipartite nuclear localization signal motif is present at residues 474-488; that stretch reads KRKADGYNQPDSKRR. Residues 490 to 505 are compositionally biased toward polar residues; the sequence is TNNQNWGSQPIAQQPL. Residue serine 497 is modified to Phosphoserine. Residue lysine 517 forms a Glycyl lysine isopeptide (Lys-Gly) (interchain with G-Cter in SUMO2) linkage.

In terms of assembly, identified in a histone pre-mRNA complex, at least composed of ERI1, LSM11, SLBP, SNRPB, SYNCRIP and YBX1. Identified in the spliceosome C complex. Component of the coding region determinant (CRD)-mediated complex, composed of DHX9, HNRNPU, IGF2BP1, SYNCRIP and YBX1. Identified in a mRNP complex, at least composed of DHX9, DDX3X, ELAVL1, HNRNPU, IGF2BP1, ILF3, PABPC1, PCBP2, PTBP2, STAU1, STAU2, SYNCRIP and YBX1. Identified in a mRNP granule complex, at least composed of ACTB, ACTN4, DHX9, ERG, HNRNPA1, HNRNPA2B1, HNRNPAB, HNRNPD, HNRNPL, HNRNPR, HNRNPU, HSPA1, HSPA8, IGF2BP1, ILF2, ILF3, NCBP1, NCL, PABPC1, PABPC4, PABPN1, RPLP0, RPS3, RPS3A, RPS4X, RPS8, RPS9, SYNCRIP, YBX1 and untranslated mRNAs. Component of the APOB mRNA editosome. Interacts with APOBEC1 and A1CF. Part of a complex associated with the FOS mCRD domain and consisting of PABPC1, PAIP1, CSDE1/UNR, HNRPD and SYNCRIP. Interacts with HNRPR, SMN, POLR2A hyperphosphorylated C-terminal domain, minute virus of mice (MVM) NS1 protein and through its C-terminal domain with SYT7, SYT8 and SYT9. The non-phosphorylated and phosphorylated forms are colocalized with PAIP1 in polysomes. Interacts with GTPBP1. Interacts with HABP4. Post-translationally, phosphorylated on tyrosine. The membrane-bound form found in microsomes is phosphorylated in vitro by insulin receptor tyrosine kinase (INSR). Phosphorylation is inhibited upon binding to RNA, whereas the cytoplasmic form is poorly phosphorylated.

The protein localises to the nucleus. It localises to the nucleoplasm. The protein resides in the cytoplasm. It is found in the microsome. In terms of biological role, heterogenous nuclear ribonucleoprotein (hnRNP) implicated in mRNA processing mechanisms. Component of the CRD-mediated complex that promotes MYC mRNA stability. Is associated in vitro with pre-mRNA, splicing intermediates and mature mRNA protein complexes. Binds to apoB mRNA AU-rich sequences. Part of the APOB mRNA editosome complex and may modulate the postranscriptional C to U RNA-editing of the APOB mRNA through either by binding to A1CF (APOBEC1 complementation factor), to APOBEC1 or to RNA itself. May be involved in translationally coupled mRNA turnover. Implicated with other RNA-binding proteins in the cytoplasmic deadenylation/translational and decay interplay of the FOS mRNA mediated by the major coding-region determinant of instability (mCRD) domain. Interacts in vitro preferentially with poly(A) and poly(U) RNA sequences. May be involved in cytoplasmic vesicle-based mRNA transport through interaction with synaptotagmins. The chain is Heterogeneous nuclear ribonucleoprotein Q (Syncrip) from Rattus norvegicus (Rat).